The chain runs to 182 residues: Putative manganese efflux pump MntP (182 aa).

6 helical membrane passes run 6–26 (TVLVALALGCDAFAVGMGVGT), 37–57 (LSFHFGLFQMMMPIAGWFVGS), 59–79 (AADLVSTWGPWISFALLLFIG), 104–126 (SSLVMLSVATSMDALGVGFSFGI), 131–149 (LFLSAVWIGITAGIMTWGA), and 164–181 (METVGGLILVAIAVKLLL).

The protein belongs to the MntP (TC 9.B.29) family.

It localises to the cell inner membrane. Its function is as follows. Probably functions as a manganese efflux pump. In Syntrophobacter fumaroxidans (strain DSM 10017 / MPOB), this protein is Putative manganese efflux pump MntP.